Here is a 91-residue protein sequence, read N- to C-terminus: Pyruvate kinase (91 aa).

Residue arginine 48 participates in substrate binding. 4 residues coordinate K(+): asparagine 50, serine 52, aspartate 82, and threonine 83. 50–53 (NFSH) is an ATP binding site. Residue arginine 89 coordinates ATP.

The protein belongs to the pyruvate kinase family. In terms of assembly, homotetramer. It depends on Mg(2+) as a cofactor. The cofactor is K(+).

It carries out the reaction pyruvate + ATP = phosphoenolpyruvate + ADP + H(+). It participates in carbohydrate degradation; glycolysis; pyruvate from D-glyceraldehyde 3-phosphate: step 5/5. This chain is Pyruvate kinase, found in Leishmania braziliensis.